A 382-amino-acid polypeptide reads, in one-letter code: Manganese peroxidase H4 (382 aa).

An N-terminal signal peptide occupies residues 1–24 (MAFGSLLAFVALAAITRAAPTAES). 5 disulfide bridges follow: C27–C39, C38–C313, C57–C141, C277–C344, and C366–C373. E59 and E63 together coordinate Mn(2+). The active-site Proton acceptor is the H70. 4 residues coordinate Ca(2+): D71, G86, D88, and S90. 2 N-linked (GlcNAc...) asparagine glycosylation sites follow: N100 and N155. H197 provides a ligand contact to heme b. T198 contributes to the Ca(2+) binding site. A Mn(2+)-binding site is contributed by D203. Ca(2+)-binding residues include D215, T217, T220, and D222. N241 carries N-linked (GlcNAc...) asparagine glycosylation.

It belongs to the peroxidase family. Ligninase subfamily. The cofactor is heme b. Requires Ca(2+) as cofactor.

Its subcellular location is the secreted. The enzyme catalyses 2 Mn(2+) + H2O2 + 2 H(+) = 2 Mn(3+) + 2 H2O. Functionally, catalyzes the oxidation of Mn(2+) to Mn(3+). The latter, acting as a diffusible redox mediator, is capable of oxidizing a variety of lignin compounds. The chain is Manganese peroxidase H4 from Phanerodontia chrysosporium (White-rot fungus).